The chain runs to 269 residues: Ribonuclease HII (269 aa).

One can recognise an RNase H type-2 domain in the interval 83-269 (YLIAGVDEVG…HRMSFLTNIL (187 aa)). The a divalent metal cation site is built by Asp-89, Glu-90, and Asp-185.

This sequence belongs to the RNase HII family. Mn(2+) serves as cofactor. It depends on Mg(2+) as a cofactor.

Its subcellular location is the cytoplasm. It catalyses the reaction Endonucleolytic cleavage to 5'-phosphomonoester.. Endonuclease that specifically degrades the RNA of RNA-DNA hybrids. This chain is Ribonuclease HII, found in Clostridium botulinum (strain Langeland / NCTC 10281 / Type F).